Here is a 174-residue protein sequence, read N- to C-terminus: Small ribosomal subunit protein uS4 (174 aa).

In terms of domain architecture, S4 RNA-binding spans Arg105–Glu169.

Belongs to the universal ribosomal protein uS4 family. In terms of assembly, part of the 30S ribosomal subunit. Contacts protein S5. The interaction surface between S4 and S5 is involved in control of translational fidelity.

One of the primary rRNA binding proteins, it binds directly to 16S rRNA where it nucleates assembly of the body of the 30S subunit. In terms of biological role, with S5 and S12 plays an important role in translational accuracy. This Natronomonas pharaonis (strain ATCC 35678 / DSM 2160 / CIP 103997 / JCM 8858 / NBRC 14720 / NCIMB 2260 / Gabara) (Halobacterium pharaonis) protein is Small ribosomal subunit protein uS4.